Reading from the N-terminus, the 637-residue chain is MSERIEWLEDGTAGGSPYSPRFGDRYRSELGGLEQAREVFLKGCGLPNAWAGQPQWCVLETGFGLGLNFLVTWAAWKADPLRPRLLHFVSTEAYPASADDVLRSALTHPELIPFAEQLKRQLWGLLPGVHRLVFEGGQVLLTLCIGDTKAMLREPSFEADSVYLDGFSPQRNPDIWDVHTFKAVARCCRRGTRIATWTIARSVRDALAQCGFVVKKVPGTPPKRDNLQGEYQPAWEVKKSRITPERKAPARCIVIGAGLAGSAVAASLARRGWQVTVLDAASTPAAGASGLPAGVLAPHVSPDDSLLSRLSRSGIRAMLQQADALLQTNIDWSPTGVLEHCVEHARQLPAAWHPGQALADAAGDWTRPATSEQLKHCGLSPETPALWHVQAGWIKPARLVQAWLSSPGVSWHGNAAVSQLVRQAGAWQALDATGNELASAELVVLAAGHGSRALSEIASPQAGRPLALQAIRGQASWGLHAPGTEQAMPAFPVNGHGSLVPRVPLEQGLAWVTGSSFERDNTSPQLRPEDEQHNFGKLKTLLPAAAQALTAQFESGQVRGWTGVRCATPSRLPALGPLENAQDVWVCSGMGSRGLTFAALCAELLAARLHGEPLPVELRQADALLPQYATRLQPSGS.

The segment at 1–20 (MSERIEWLEDGTAGGSPYSP) is disordered. The interval 1 to 232 (MSERIEWLED…KRDNLQGEYQ (232 aa)) is tRNA (mnm(5)s(2)U34)-methyltransferase. The FAD-dependent cmnm(5)s(2)U34 oxidoreductase stretch occupies residues 255 to 637 (IGAGLAGSAV…YATRLQPSGS (383 aa)).

This sequence in the N-terminal section; belongs to the methyltransferase superfamily. tRNA (mnm(5)s(2)U34)-methyltransferase family. In the C-terminal section; belongs to the DAO family. It depends on FAD as a cofactor.

The protein localises to the cytoplasm. The catalysed reaction is 5-aminomethyl-2-thiouridine(34) in tRNA + S-adenosyl-L-methionine = 5-methylaminomethyl-2-thiouridine(34) in tRNA + S-adenosyl-L-homocysteine + H(+). In terms of biological role, catalyzes the last two steps in the biosynthesis of 5-methylaminomethyl-2-thiouridine (mnm(5)s(2)U) at the wobble position (U34) in tRNA. Catalyzes the FAD-dependent demodification of cmnm(5)s(2)U34 to nm(5)s(2)U34, followed by the transfer of a methyl group from S-adenosyl-L-methionine to nm(5)s(2)U34, to form mnm(5)s(2)U34. This chain is tRNA 5-methylaminomethyl-2-thiouridine biosynthesis bifunctional protein MnmC, found in Polaromonas naphthalenivorans (strain CJ2).